The primary structure comprises 247 residues: uncharacterized protein (247 aa).

It is found in the mitochondrion. This is an uncharacterized protein from Schizosaccharomyces pombe (strain 972 / ATCC 24843) (Fission yeast).